The primary structure comprises 337 residues: DNA-directed RNA polymerase subunit alpha (337 aa).

Residues 1–233 (MIQKNWQELI…DQLALFINFK (233 aa)) form an alpha N-terminal domain (alpha-NTD) region. The tract at residues 249–337 (FNPALLKKVD…DLAKRYEDQY (89 aa)) is alpha C-terminal domain (alpha-CTD).

The protein belongs to the RNA polymerase alpha chain family. In terms of assembly, homodimer. The RNAP catalytic core consists of 2 alpha, 1 beta, 1 beta' and 1 omega subunit. When a sigma factor is associated with the core the holoenzyme is formed, which can initiate transcription.

It carries out the reaction RNA(n) + a ribonucleoside 5'-triphosphate = RNA(n+1) + diphosphate. In terms of biological role, DNA-dependent RNA polymerase catalyzes the transcription of DNA into RNA using the four ribonucleoside triphosphates as substrates. This chain is DNA-directed RNA polymerase subunit alpha, found in Bartonella henselae (strain ATCC 49882 / DSM 28221 / CCUG 30454 / Houston 1) (Rochalimaea henselae).